Here is a 514-residue protein sequence, read N- to C-terminus: Transmembrane protein 151B (514 aa).

The disordered stretch occupies residues 1–40 (MSAEGEPAEAVAETPANSPGEEAAAAAATTDVDVREEQRP). 3 helical membrane-spanning segments follow: residues 57–77 (CLLL…CQVT), 104–124 (YVYI…VECW), and 286–306 (PWYV…SWPL).

This sequence belongs to the TMEM151 family.

It localises to the membrane. In Xenopus tropicalis (Western clawed frog), this protein is Transmembrane protein 151B (tmem151b).